Here is a 517-residue protein sequence, read N- to C-terminus: Acetylcholine receptor subunit delta (517 aa).

The first 21 residues, 1-21 (MAGPVPTLGLLAALVVCGSWG), serve as a signal peptide directing secretion. The Extracellular portion of the chain corresponds to 22-245 (LNEEQRLIQH…VTFYLIIRRK (224 aa)). Residues Asn97, Asn164, and Asn190 are each glycosylated (N-linked (GlcNAc...) asparagine). The cysteines at positions 151 and 165 are disulfide-linked. Helical transmembrane passes span 246–270 (PLFY…VFYL), 278–296 (TSVA…LLIS), and 312–333 (FLLF…VLNI). Over 334–471 (HFRTPSTHVL…WNQVARTVDR (138 aa)) the chain is Cytoplasmic. Tyr390 bears the Phosphotyrosine; by Tyr-kinases mark. The helical transmembrane segment at 472-490 (LCLFVVTPVMVVGTAWIFL) threads the bilayer.

The protein belongs to the ligand-gated ion channel (TC 1.A.9) family. Acetylcholine receptor (TC 1.A.9.1) subfamily. Delta/CHRND sub-subfamily. In terms of assembly, pentamer of two alpha chains, and one each of the beta, delta, and gamma (in immature muscle) or epsilon (in mature muscle) chains. The muscle heteropentamer composed of alpha-1, beta-1, delta, epsilon subunits interacts with the alpha-conotoxin ImII.

It localises to the postsynaptic cell membrane. It is found in the cell membrane. It catalyses the reaction K(+)(in) = K(+)(out). The catalysed reaction is Na(+)(in) = Na(+)(out). In terms of biological role, after binding acetylcholine, the AChR responds by an extensive change in conformation that affects all subunits and leads to opening of an ion-conducting channel across the plasma membrane. The chain is Acetylcholine receptor subunit delta (Chrnd) from Rattus norvegicus (Rat).